The primary structure comprises 358 residues: 3'(2'),5'-bisphosphate nucleotidase (358 aa).

The active-site Proton acceptor is Asp52. Mg(2+) is bound by residues Glu78, Asp140, Ile142, and Asp143. Residue Thr145 is the Proton acceptor of the active site. Residues Thr145, His239, Ser263, Lys266, Arg280, and Asp292 each coordinate adenosine 3',5'-bisphosphate. Positions 239, 263, 266, 280, and 292 each coordinate AMP. Asp292 provides a ligand contact to Mg(2+).

This sequence belongs to the inositol monophosphatase superfamily. It depends on Mg(2+) as a cofactor. Is constitutively transcribed in both roots and shoots.

The enzyme catalyses 3'-phosphoadenylyl sulfate + H2O = adenosine 5'-phosphosulfate + phosphate. It catalyses the reaction adenosine 3',5'-bisphosphate + H2O = AMP + phosphate. It carries out the reaction adenosine 2',5'-bisphosphate + H2O = AMP + phosphate. Its activity is regulated as follows. Inhibited by Ca(2+), Li(+), and Na(+) and activated by K(+). Its function is as follows. Phosphatase that converts adenosine 3'-phosphate 5'-phosphosulfate (PAPS) to adenosine 5'-phosphosulfate (APS) and 3'(2')-phosphoadenosine 5'-phosphate (PAP) to AMP. May regulate the flux of sulfur in the sulfur-activation pathway by converting PAPS to APS. Shows no activity on myo-inositol 1-phosphate, beta-glycerol phosphate, NADPH, NADP and 5'-AMP. This Oryza sativa (Rice) protein is 3'(2'),5'-bisphosphate nucleotidase.